The following is a 521-amino-acid chain: Probable protein kinase UbiB (521 aa).

One can recognise a Protein kinase domain in the interval 119-497; the sequence is SFDRQPVASA…QKRTNRLLQS (379 aa). Residues 125–133 and K151 each bind ATP; that span reads VASASIAQV. D286 (proton acceptor) is an active-site residue. Residues 496-516 form a helical membrane-spanning segment; sequence QSLIYGGLGFVLGLLVMQLFV.

Belongs to the ABC1 family. UbiB subfamily.

The protein localises to the cell inner membrane. The protein operates within cofactor biosynthesis; ubiquinone biosynthesis [regulation]. Its function is as follows. Is probably a protein kinase regulator of UbiI activity which is involved in aerobic coenzyme Q (ubiquinone) biosynthesis. This chain is Probable protein kinase UbiB, found in Acidovorax sp. (strain JS42).